The following is a 124-amino-acid chain: MNKVKFYVLFTALLSSLCAHGAPQSITELCSEYHNTQIYTINDKILSYTESMAGKREMVIITFKSGATFQVEVPGSQHIDSQKKAIERMKDTLRITYLTETKIDKLCVWNNKTPNSIAAISMEN.

A signal peptide spans 1 to 21 (MNKVKFYVLFTALLSSLCAHG). Cysteine 30 and cysteine 107 are oxidised to a cystine.

In terms of assembly, heterohexamer of one A chain and of five B chains.

The biological activity of the toxin is produced by the A chain, which activates intracellular adenyl cyclase. In Escherichia coli, this protein is Heat-labile enterotoxin B chain (eltB).